A 319-amino-acid chain; its full sequence is Methyltransferase tpcM (319 aa).

The segment at 63-155 (DVGAGIGPYA…QLRPGGTFAC (93 aa)) is methyltransferase domain.

Belongs to the methyltransferase superfamily. In terms of tissue distribution, specifically expressed in conidia.

It participates in secondary metabolite biosynthesis. In terms of biological role, methyltransferase; part of the gene cluster that mediates the biosynthesis of trypacidin, a mycotoxin with antiprotozoal activity and that plays a role in the infection process. The pathway begins with the synthesis of atrochrysone thioester by the polyketide synthase (PKS) tpcC. The atrochrysone carboxyl ACP thioesterase tpcB then breaks the thioester bond and releases the atrochrysone carboxylic acid from tpcC. The decarboxylase tpcK converts atrochrysone carboxylic acid to atrochrysone which is further reduced into emodin anthrone. The next step is performed by the emodin anthrone oxygenase tpcL that catalyzes the oxidation of emodinanthrone to emodin. Emodin O-methyltransferase encoded by tpcA catalyzes methylation of the 8-hydroxy group of emodin to form questin. Ring cleavage of questin by questin oxidase tpcI leads to desmethylsulochrin via several intermediates including questin epoxide. Another methylation step catalyzed by tpcM leads to the formation of sulochrin which is further converted to monomethylsulfochrin by tpcH. Finally, the tpcJ catalyzes the conversion of monomethylsulfochrin to trypacidin. Trypacidin is toxic for human pulmonary and bronchial epithelial cells by initiating the intracellular formation of nitric oxide (NO) and hydrogen peroxide (H(2)O(2)), thus triggering host necrotic cell death. The trypacidin pathway is also able to produce endocrocin via a distinct route from the endocrocin Enc pathway. In Aspergillus fumigatus (strain ATCC MYA-4609 / CBS 101355 / FGSC A1100 / Af293) (Neosartorya fumigata), this protein is Methyltransferase tpcM.